We begin with the raw amino-acid sequence, 300 residues long: Porphobilinogen deaminase (300 aa).

Residue cysteine 239 is modified to S-(dipyrrolylmethanemethyl)cysteine.

It belongs to the HMBS family. In terms of assembly, monomer. The cofactor is dipyrromethane.

It carries out the reaction 4 porphobilinogen + H2O = hydroxymethylbilane + 4 NH4(+). Its pathway is porphyrin-containing compound metabolism; protoporphyrin-IX biosynthesis; coproporphyrinogen-III from 5-aminolevulinate: step 2/4. Its function is as follows. Tetrapolymerization of the monopyrrole PBG into the hydroxymethylbilane pre-uroporphyrinogen in several discrete steps. The polypeptide is Porphobilinogen deaminase (Francisella tularensis subsp. novicida (strain U112)).